The chain runs to 175 residues: Inorganic pyrophosphatase (175 aa).

K29, R43, and Y55 together coordinate substrate. Mg(2+)-binding residues include D65, D70, and D102. Y141 lines the substrate pocket.

Belongs to the PPase family. Homohexamer. The cofactor is Mg(2+).

The protein resides in the cytoplasm. The enzyme catalyses diphosphate + H2O = 2 phosphate + H(+). Functionally, catalyzes the hydrolysis of inorganic pyrophosphate (PPi) forming two phosphate ions. This chain is Inorganic pyrophosphatase, found in Rickettsia bellii (strain RML369-C).